The chain runs to 307 residues: 2-dehydropantoate 2-reductase (307 aa).

NADP(+) is bound by residues 7 to 12 (GSGAMG), Asn-102, and Ala-128. Asn-102 contacts substrate. The active-site Proton donor is the Lys-184. The substrate site is built by Asn-188, Asn-192, and Ser-255. Position 268 (Glu-268) interacts with NADP(+).

It belongs to the ketopantoate reductase family.

It localises to the cytoplasm. The catalysed reaction is (R)-pantoate + NADP(+) = 2-dehydropantoate + NADPH + H(+). Its pathway is cofactor biosynthesis; (R)-pantothenate biosynthesis; (R)-pantoate from 3-methyl-2-oxobutanoate: step 2/2. Functionally, catalyzes the NADPH-dependent reduction of ketopantoate into pantoic acid. This Streptococcus pyogenes serotype M18 (strain MGAS8232) protein is 2-dehydropantoate 2-reductase (apbA).